Here is a 374-residue protein sequence, read N- to C-terminus: DNA replication and repair protein RecF (374 aa).

An ATP-binding site is contributed by 34-41 (GDNGAGKT).

This sequence belongs to the RecF family.

It localises to the cytoplasm. In terms of biological role, the RecF protein is involved in DNA metabolism; it is required for DNA replication and normal SOS inducibility. RecF binds preferentially to single-stranded, linear DNA. It also seems to bind ATP. This chain is DNA replication and repair protein RecF, found in Rhizobium etli (strain ATCC 51251 / DSM 11541 / JCM 21823 / NBRC 15573 / CFN 42).